The sequence spans 1293 residues: Putative DNA-directed RNA polymerase 008R (1293 aa).

Zn(2+) contacts are provided by cysteine 61, cysteine 64, cysteine 71, histidine 74, cysteine 99, cysteine 102, and cysteine 123. A DNA-binding region spans residues 270–339 (TNRKPMAGIK…PVMVTPFNVS (70 aa)). Residues 354–376 (EMRDGTVHRPSEWRPSHGDHMET) are compositionally biased toward basic and acidic residues. Residues 354–390 (EMRDGTVHRPSEWRPSHGDHMETADGSPLGRVTRPSY) are disordered. 3 residues coordinate Mg(2+): aspartate 474, aspartate 476, and aspartate 478. The segment at 724–734 (GQQYVGGSRPG) is alpha-amanitin binding. A bridging helix region spans residues 776–788 (PREVFFHAKSGRE).

Belongs to the RNA polymerase beta' chain family.

It carries out the reaction RNA(n) + a ribonucleoside 5'-triphosphate = RNA(n+1) + diphosphate. Functionally, component of the DNA-dependent RNA polymerase that catalyzes the transcription of DNA into RNA using the four ribonucleoside triphosphates as substrates. Largest and catalytic component of RNA polymerase II which synthesizes mRNA precursors and many functional non-coding RNAs. Forms the polymerase active center together with the second largest subunit. The chain is Putative DNA-directed RNA polymerase 008R from Frog virus 3 (isolate Goorha) (FV-3).